The sequence spans 202 residues: dTTP/UTP pyrophosphatase (202 aa).

The active-site Proton acceptor is the D71.

It belongs to the Maf family. YhdE subfamily. A divalent metal cation serves as cofactor.

It localises to the cytoplasm. It catalyses the reaction dTTP + H2O = dTMP + diphosphate + H(+). The enzyme catalyses UTP + H2O = UMP + diphosphate + H(+). Functionally, nucleoside triphosphate pyrophosphatase that hydrolyzes dTTP and UTP. May have a dual role in cell division arrest and in preventing the incorporation of modified nucleotides into cellular nucleic acids. This is dTTP/UTP pyrophosphatase from Zymomonas mobilis subsp. mobilis (strain ATCC 31821 / ZM4 / CP4).